The sequence spans 616 residues: Zinc metalloproteinase-disintegrin-like VLAIP-A (616 aa).

A signal peptide spans 1–20 (MMQVLLVTISLAVFPYQGSS). Residues 21–194 (IILESGNVND…KASQLNLTPE (174 aa)) constitute a propeptide that is removed on maturation. Residue Gln-195 is modified to Pyrrolidone carboxylic acid. In terms of domain architecture, Peptidase M12B spans 203 to 399 (KYIKLVIVAD…KMPQCILNKP (197 aa)). 3 disulfide bridges follow: Cys-314/Cys-394, Cys-354/Cys-378, and Cys-356/Cys-361. A Zn(2+)-binding site is contributed by His-339. The active site involves Glu-340. Zn(2+)-binding residues include His-343 and His-349. N-linked (GlcNAc...) asparagine glycosylation is present at Asn-377. Positions 407–493 (PAVCGNYLVE…ECPTDQFQRN (87 aa)) constitute a Disintegrin domain. Val-409, Asn-412, Leu-414, Glu-416, Glu-419, and Asp-422 together coordinate Ca(2+). Intrachain disulfides connect Cys-410–Cys-439, Cys-421–Cys-434, Cys-423–Cys-429, Cys-433–Cys-456, Cys-447–Cys-453, Cys-452–Cys-478, Cys-465–Cys-485, Cys-472–Cys-504, Cys-497–Cys-509, Cys-516–Cys-566, Cys-531–Cys-577, Cys-544–Cys-554, Cys-561–Cys-603, and Cys-597–Cys-609. A D/ECD-tripeptide motif is present at residues 471–473 (ECD).

Belongs to the venom metalloproteinase (M12B) family. P-III subfamily. P-IIIc sub-subfamily. Heterodimer; disulfide-linked. Requires Zn(2+) as cofactor. Post-translationally, the N-terminus is blocked. As to expression, expressed by the venom gland.

The protein localises to the secreted. Its activity is regulated as follows. Inhibited by EDTA or 1,10-phenanthroline. Not inhibited by PMSF. Snake venom zinc metalloprotease that hydrolyzes the alpha-chain (FGA) and more slowly the beta-chain (FGB) of fibrinogen, without affecting the gamma-chain. Cleaves alpha-chain of fibrinogen at '432-Lys-|-Leu-433' and '535-Pro-|-Met-536' bonds. Induces apoptosis in vascular endothelial cells and inhibits endothelial cell adhesion to extracellular matrix proteins such as fibrinogen, fibronectin, vitronectin, collagen I, and collagen IV. Also hydrolyzes azocasein, and insulin B-chain (at the '38-Ala-|-Leu-39' bond). The sequence is that of Zinc metalloproteinase-disintegrin-like VLAIP-A from Macrovipera lebetinus (Levantine viper).